A 177-amino-acid polypeptide reads, in one-letter code: Respiratory supercomplex factor 1, mitochondrial (177 aa).

One can recognise an HIG1 domain in the interval 3–94 (DSTRVATVYP…AAKEKAELEA (92 aa)). 2 helical membrane-spanning segments follow: residues 31 to 48 (WVPL…MSAV) and 61 to 83 (WMRA…SMAL). Residues 83–129 (LKAAKEKAELEAANAPELTQEQIRQLEKEKEEFEMRLKEAEYSHAQE) adopt a coiled-coil conformation. The tract at residues 150-177 (SAAVGVEVDTENRPSTPAPSGKSWWKMW) is disordered.

Belongs to the RCF1 family. In terms of assembly, associates with the respiratory chain complex III/complex IV supercomplex.

The protein resides in the mitochondrion membrane. Its function is as follows. Cytochrome c oxidase subunit which plays a role in assembly of respiratory supercomplexes. The polypeptide is Respiratory supercomplex factor 1, mitochondrial (RCF1) (Coprinopsis cinerea (strain Okayama-7 / 130 / ATCC MYA-4618 / FGSC 9003) (Inky cap fungus)).